The sequence spans 383 residues: Probable tRNA sulfurtransferase (383 aa).

The 101-residue stretch at 58-158 folds into the THUMP domain; that stretch reads NEIIHILKMI…ENKSYVWFDK (101 aa). ATP contacts are provided by residues 176–177, 201–202, Arg-259, Gly-281, and Gln-290; these read LL and TF.

Belongs to the ThiI family.

It localises to the cytoplasm. The enzyme catalyses [ThiI sulfur-carrier protein]-S-sulfanyl-L-cysteine + a uridine in tRNA + 2 reduced [2Fe-2S]-[ferredoxin] + ATP + H(+) = [ThiI sulfur-carrier protein]-L-cysteine + a 4-thiouridine in tRNA + 2 oxidized [2Fe-2S]-[ferredoxin] + AMP + diphosphate. It carries out the reaction [ThiS sulfur-carrier protein]-C-terminal Gly-Gly-AMP + S-sulfanyl-L-cysteinyl-[cysteine desulfurase] + AH2 = [ThiS sulfur-carrier protein]-C-terminal-Gly-aminoethanethioate + L-cysteinyl-[cysteine desulfurase] + A + AMP + 2 H(+). The protein operates within cofactor biosynthesis; thiamine diphosphate biosynthesis. In terms of biological role, catalyzes the ATP-dependent transfer of a sulfur to tRNA to produce 4-thiouridine in position 8 of tRNAs, which functions as a near-UV photosensor. Also catalyzes the transfer of sulfur to the sulfur carrier protein ThiS, forming ThiS-thiocarboxylate. This is a step in the synthesis of thiazole, in the thiamine biosynthesis pathway. The sulfur is donated as persulfide by IscS. The polypeptide is Probable tRNA sulfurtransferase (Malacoplasma penetrans (strain HF-2) (Mycoplasma penetrans)).